The following is a 123-amino-acid chain: Basic phospholipase A2 Ph-TX1 (123 aa).

3 residues coordinate Ca(2+): Tyr-27, Gly-29, and Gly-31. Intrachain disulfides connect Cys-28–Cys-45, Cys-44–Cys-96, Cys-50–Cys-123, Cys-51–Cys-89, Cys-59–Cys-83, and Cys-77–Cys-87. His-48 is an active-site residue. Asp-49 provides a ligand contact to Ca(2+). Asp-90 is a catalytic residue.

Belongs to the phospholipase A2 family. Group II subfamily. D49 sub-subfamily. As to quaternary structure, monomer. Ca(2+) is required as a cofactor. As to expression, expressed by the venom gland.

It localises to the secreted. The catalysed reaction is a 1,2-diacyl-sn-glycero-3-phosphocholine + H2O = a 1-acyl-sn-glycero-3-phosphocholine + a fatty acid + H(+). Its activity is regulated as follows. Inhibited by divalent cations different from calcium ions (cadmium, magnesium, manganese, zinc), since they act as competitive antagonists of this cofactor. Snake venom phospholipase A2 (PLA2) that induces in vivo myotoxicity, moderates footpad edema, and causes in vitro neuromuscular blockade. PLA2 catalyzes the calcium-dependent hydrolysis of the 2-acyl groups in 3-sn-phosphoglycerides. The sequence is that of Basic phospholipase A2 Ph-TX1 from Bothrocophias hyoprora (Amazonian hognose viper).